Here is an 87-residue protein sequence, read N- to C-terminus: Large ribosomal subunit protein bL28 (87 aa).

It belongs to the bacterial ribosomal protein bL28 family.

The chain is Large ribosomal subunit protein bL28 from Akkermansia muciniphila (strain ATCC BAA-835 / DSM 22959 / JCM 33894 / BCRC 81048 / CCUG 64013 / CIP 107961 / Muc).